We begin with the raw amino-acid sequence, 142 residues long: Small ribosomal subunit protein uS11c (142 aa).

It belongs to the universal ribosomal protein uS11 family. As to quaternary structure, part of the 30S ribosomal subunit.

It localises to the plastid. Its subcellular location is the chloroplast. The polypeptide is Small ribosomal subunit protein uS11c (Welwitschia mirabilis (Tree tumbo)).